We begin with the raw amino-acid sequence, 216 residues long: Ras-related protein RABA1c (216 aa).

GTP is bound at residue 20-27 (GDSGVGKS). Residues 42–50 (SKSTIGVEF) carry the Effector region motif. Residues 68–72 (DTAGQ), 126–129 (NKSD), and 156–157 (SA) each bind GTP. 2 S-geranylgeranyl cysteine lipidation sites follow: C213 and C214.

The protein belongs to the small GTPase superfamily. Rab family.

It localises to the cell membrane. Intracellular vesicle trafficking and protein transport. The protein is Ras-related protein RABA1c (RABA1C) of Arabidopsis thaliana (Mouse-ear cress).